Reading from the N-terminus, the 370-residue chain is Quinolinate synthase (370 aa).

Iminosuccinate contacts are provided by His-62 and Ser-83. Position 128 (Cys-128) interacts with [4Fe-4S] cluster. Iminosuccinate is bound by residues 154–156 and Ser-171; that span reads YAN. Cys-215 is a binding site for [4Fe-4S] cluster. Iminosuccinate is bound by residues 241–243 and Thr-258; that span reads HPE. Cys-312 contacts [4Fe-4S] cluster.

The protein belongs to the quinolinate synthase family. Type 1 subfamily. [4Fe-4S] cluster serves as cofactor.

The protein localises to the cytoplasm. It carries out the reaction iminosuccinate + dihydroxyacetone phosphate = quinolinate + phosphate + 2 H2O + H(+). The protein operates within cofactor biosynthesis; NAD(+) biosynthesis; quinolinate from iminoaspartate: step 1/1. In terms of biological role, catalyzes the condensation of iminoaspartate with dihydroxyacetone phosphate to form quinolinate. This Neisseria meningitidis serogroup A / serotype 4A (strain DSM 15465 / Z2491) protein is Quinolinate synthase.